The chain runs to 192 residues: Inosine triphosphate pyrophosphatase (192 aa).

Position 8–13 (8–13) interacts with ITP; it reads TTNLKK. E34 provides a ligand contact to Mg(2+). ITP-binding positions include K46, 64 to 65, K81, 141 to 144, K164, and 169 to 170; these read DT, EGFD, and HR.

This sequence belongs to the HAM1 NTPase family. As to quaternary structure, homodimer. Mg(2+) serves as cofactor. The cofactor is Mn(2+).

It localises to the cytoplasm. It is found in the nucleus. It catalyses the reaction ITP + H2O = IMP + diphosphate + H(+). It carries out the reaction dITP + H2O = dIMP + diphosphate + H(+). The enzyme catalyses XTP + H2O = XMP + diphosphate + H(+). Pyrophosphatase that hydrolyzes non-canonical purine nucleotides such as inosine triphosphate (ITP), deoxyinosine triphosphate (dITP) or xanthosine 5'-triphosphate (XTP) to their respective monophosphate derivatives. The enzyme does not distinguish between the deoxy- and ribose forms. Probably excludes non-canonical purines from RNA and DNA precursor pools, thus preventing their incorporation into RNA and DNA and avoiding chromosomal lesions. The polypeptide is Inosine triphosphate pyrophosphatase (Encephalitozoon cuniculi (strain GB-M1) (Microsporidian parasite)).